Here is a 190-residue protein sequence, read N- to C-terminus: Elongation factor P (190 aa).

This sequence belongs to the elongation factor P family.

It is found in the cytoplasm. It functions in the pathway protein biosynthesis; polypeptide chain elongation. Functionally, involved in peptide bond synthesis. Stimulates efficient translation and peptide-bond synthesis on native or reconstituted 70S ribosomes in vitro. Probably functions indirectly by altering the affinity of the ribosome for aminoacyl-tRNA, thus increasing their reactivity as acceptors for peptidyl transferase. The chain is Elongation factor P from Pseudomonas fluorescens (strain ATCC BAA-477 / NRRL B-23932 / Pf-5).